A 303-amino-acid polypeptide reads, in one-letter code: N-acetyl-D-glucosamine kinase (303 aa).

ATP is bound by residues Gly-4–Lys-11 and Gly-133–Leu-140. Zn(2+)-binding residues include His-157, Cys-177, Cys-179, and Cys-184.

Belongs to the ROK (NagC/XylR) family. NagK subfamily.

The enzyme catalyses N-acetyl-D-glucosamine + ATP = N-acetyl-D-glucosamine 6-phosphate + ADP + H(+). It functions in the pathway cell wall biogenesis; peptidoglycan recycling. Functionally, catalyzes the phosphorylation of N-acetyl-D-glucosamine (GlcNAc) derived from cell-wall degradation, yielding GlcNAc-6-P. The polypeptide is N-acetyl-D-glucosamine kinase (Salmonella dublin (strain CT_02021853)).